A 237-amino-acid polypeptide reads, in one-letter code: Endonuclease NucS (237 aa).

Belongs to the NucS endonuclease family.

It localises to the cytoplasm. In terms of biological role, cleaves both 3' and 5' ssDNA extremities of branched DNA structures. In Saccharolobus islandicus (strain L.S.2.15 / Lassen #1) (Sulfolobus islandicus), this protein is Endonuclease NucS.